A 394-amino-acid polypeptide reads, in one-letter code: uncharacterized protein (394 aa).

2 positions are modified to phosphoserine: Ser-117 and Ser-121. 3 disordered regions span residues 177-295 (DSDE…PGTF), 315-347 (KRSI…GSLS), and 370-394 (SSEV…AHRV). Over residues 178 to 190 (SDEEDEVDDEEIE) the composition is skewed to acidic residues. Composition is skewed to polar residues over residues 191 to 207 (SFNS…NSRY) and 216 to 230 (EKQS…VSQI). Acidic residues-rich tracts occupy residues 231–263 (SDDE…DDED) and 284–295 (IPDDTDFVPGTF). A compositionally biased stretch (polar residues) spans 370–379 (SSEVLRNSKS). Ser-379 is subject to Phosphoserine.

It is found in the nucleus. This is an uncharacterized protein from Schizosaccharomyces pombe (strain 972 / ATCC 24843) (Fission yeast).